The primary structure comprises 27 residues: M-lycotoxin-Hc2a (27 aa).

Expressed by the venom gland.

It localises to the secreted. In terms of biological role, forms pore that permeabilize the cell membrane. Promotes efflux of calcium from synaptosomes, causes hemolysis, and dissipates voltage gradients across muscle membrane. Potently inhibits the growth of bacteria, yeast and Leishmania. May function both in the prey capture strategy as well as protection from infectious organisms arising from prey ingestion. The sequence is that of M-lycotoxin-Hc2a from Hogna carolinensis (Carolina wolf spider).